The primary structure comprises 161 residues: UPF0178 protein BOV_1904 (161 aa).

Belongs to the UPF0178 family.

In Brucella ovis (strain ATCC 25840 / 63/290 / NCTC 10512), this protein is UPF0178 protein BOV_1904.